Consider the following 236-residue polypeptide: Small ribosomal subunit protein uS2c (236 aa).

This sequence belongs to the universal ribosomal protein uS2 family.

Its subcellular location is the plastid. It localises to the chloroplast. This chain is Small ribosomal subunit protein uS2c (rps2), found in Olimarabidopsis pumila (Dwarf rocket).